A 239-amino-acid polypeptide reads, in one-letter code: Small ribosomal subunit protein uS2 (239 aa).

It belongs to the universal ribosomal protein uS2 family.

This chain is Small ribosomal subunit protein uS2, found in Histophilus somni (strain 129Pt) (Haemophilus somnus).